Consider the following 727-residue polypeptide: MEDSYKDRTSLMKGAKDIAREVKKQTVKKVNQAVDRAQDEYTQRSYSRFQDEEDDDDYYPAGETYNGEANDDEGSSEATEGHDEDDEIYEGEYQGIPSMNQAKDSIVSVGQPKGDEYKDRRELESERRADEEELAQQYELIIQECGHGRFQWALFFVLGMALMADGVEVFVVGFVLPSAETDLCIPNSGSGWLGSIVYLGMMVGAFFWGGLADKVGRKQSLLICMSVNGFFAFLSSFVQGYGFFLFCRLLSGFGIGGAIPTVFSYFAEVLAREKRGEHLSWLCMFWMIGGIYASAMAWAIIPHYGWSFSMGSAYQFHSWRVFVIVCALPCVSSVVALTFMPESPRFLLEVGKHDEAWMILKLIHDTNMRARGQPEKVFTVNKIKTPKQIDELIEIESDTGTWYRRCFVRIRTELYGIWLTFMRCFNYPVRDNTIKLTIVWFTLSFGYYGLSVWFPDVIKPLQSDEYALLTRNVERDKYANFTINFTMENQIHTGMEYDNGRFIGVKFKSVTFKDSVFKSCTFEDVTSVNTYFKNCTFIDTVFDNTDFEPYKFIDSEFKNCSFFHNKTGCQITFDDDYSAYWIYFVNFLGTLAVLPGNIVSALLMDRIGRLTMLGGSMVLSGISCFFLWFGTSESMMIGMLCLYNGLTISAWNSLDVVTVELYPTDRRATGFGFLNALCKAAAVLGNLIFGSLVSITKSIPILLASTVLVCGGLVGLCLPDTRTQVLM.

Residues 1-57 (MEDSYKDRTSLMKGAKDIAREVKKQTVKKVNQAVDRAQDEYTQRSYSRFQDEEDDDD) are interaction with SYT1. At 1–154 (MEDSYKDRTS…CGHGRFQWAL (154 aa)) the chain is on the cytoplasmic side. 2 disordered regions span residues 24-84 (KQTV…GHDE) and 109-128 (VGQP…SERR). Phosphoserine occurs at positions 75 and 76. T79 carries the phosphothreonine modification. The span at 113 to 128 (KGDEYKDRRELESERR) shows a compositional bias: basic and acidic residues. A helical transmembrane segment spans residues 155–175 (FFVLGMALMADGVEVFVVGFV). Residues 176 to 191 (LPSAETDLCIPNSGSG) are Extracellular-facing. A helical membrane pass occupies residues 192–212 (WLGSIVYLGMMVGAFFWGGLA). Over 213 to 226 (DKVGRKQSLLICMS) the chain is Cytoplasmic. A helical transmembrane segment spans residues 227–247 (VNGFFAFLSSFVQGYGFFLFC). Position 248 (R248) is a topological domain, extracellular. A helical membrane pass occupies residues 249–269 (LLSGFGIGGAIPTVFSYFAEV). Topologically, residues 270 to 280 (LAREKRGEHLS) are cytoplasmic. Residues 281–301 (WLCMFWMIGGIYASAMAWAII) traverse the membrane as a helical segment. Topologically, residues 302 to 320 (PHYGWSFSMGSAYQFHSWR) are extracellular. The chain crosses the membrane as a helical span at residues 321 to 341 (VFVIVCALPCVSSVVALTFMP). At 342 to 437 (ESPRFLLEVG…PVRDNTIKLT (96 aa)) the chain is on the cytoplasmic side. The helical transmembrane segment at 438-458 (IVWFTLSFGYYGLSVWFPDVI) threads the bilayer. Topologically, residues 459–578 (KPLQSDEYAL…CQITFDDDYS (120 aa)) are extracellular. Y466 is modified (phosphotyrosine). Residues N480, N484, N534, N559, and N565 are each glycosylated (N-linked (GlcNAc...) asparagine). A (Microbial infection) C.botulinum neurotoxin type A-binding region spans residues 519–563 (SCTFEDVTSVNTYFKNCTFIDTVFDNTDFEPYKFIDSEFKNCSFF). A helical membrane pass occupies residues 579–599 (AYWIYFVNFLGTLAVLPGNIV). Residues 600 to 609 (SALLMDRIGR) lie on the Cytoplasmic side of the membrane. The helical transmembrane segment at 610–630 (LTMLGGSMVLSGISCFFLWFG) threads the bilayer. Over 631-636 (TSESMM) the chain is Extracellular. Residues 637–657 (IGMLCLYNGLTISAWNSLDVV) form a helical membrane-spanning segment. Residues 658 to 669 (TVELYPTDRRAT) lie on the Cytoplasmic side of the membrane. Residues 670–690 (GFGFLNALCKAAAVLGNLIFG) form a helical membrane-spanning segment. Residues 691–698 (SLVSITKS) are Extracellular-facing. The chain crosses the membrane as a helical span at residues 699–719 (IPILLASTVLVCGGLVGLCLP). Over 720–727 (DTRTQVLM) the chain is Cytoplasmic.

Belongs to the major facilitator superfamily. As to quaternary structure, interacts with SYT1 in a calcium-dependent manner. In terms of assembly, (Microbial infection) Interacts with C.botulinum neurotoxin type A1 and type A2 (BoNT/A, botA). Interaction is improved by glycosylation of SV2. N-glycosylated. Upon expression in a kidney cell line the most abundant glycan on Asn-534 is GlcNAc(3)Hex(5), while on Asn-559 and Asn-565 the most abundant glycan is GlcNAc2Fuc1Man3GlcNAc3Gal3. Both Asn-559 and Asn-565 have a high degree of glycan heterogeneity.

The protein localises to the cytoplasmic vesicle. Its subcellular location is the secretory vesicle. It localises to the synaptic vesicle membrane. Functionally, plays a role in the control of regulated secretion in neural and endocrine cells, enhancing selectively low-frequency neurotransmission. Positively regulates vesicle fusion by maintaining the readily releasable pool of secretory vesicles. Its function is as follows. (Microbial infection) Receptor for C.botulinum neurotoxin type A (BoNT/A, botA); the toxin probably binds via extracellular loop 4. Recognition by BoNT/A relies on both protein-protein and protein-N-glycosylation; glycosylation of Asn-559 increases its affinity for BoNT/A. Also serves as a receptor for the closely related C.botulinum neurotoxin type A2; glycosylation is not essential but enhances the interaction. In terms of biological role, (Microbial infection) Possible receptor for C.botulinum neurotoxin type D (BoNT/D, botD); note that type D does not usually infect humans. This is Synaptic vesicle glycoprotein 2C (SV2C) from Homo sapiens (Human).